The following is a 536-amino-acid chain: Lipid scramblase CLPTM1L (536 aa).

Residues 1-9 (MLSRSSFTS) lie on the Cytoplasmic side of the membrane. The helical transmembrane segment at 10–30 (LAVGVFAVYVAHTCWVMYGIV) threads the bilayer. Residues 31-284 (YTRPCPSGGA…VKGIFVDTNL (254 aa)) are Extracellular-facing. N-linked (GlcNAc...) asparagine glycosylation is found at Asn92, Asn102, and Asn229. A helical transmembrane segment spans residues 285–305 (YFLALTFFVAAFHLLFDFLAF). At 306–324 (KNDISFWKKKRSMIGMSTK) the chain is on the cytoplasmic side. The helical transmembrane segment at 325–342 (AVLWRCFSTVVIFLFLLD) threads the bilayer. Over 343 to 346 (EQTS) the chain is Extracellular. Residues 347 to 364 (LLVLIPAGIGAVIELWKV) traverse the membrane as a helical segment. Residues 365-402 (KKALKMTVKWQGIRPKVQFGASNDSEKKTEEYDTQAMK) lie on the Cytoplasmic side of the membrane. The chain crosses the membrane as a helical span at residues 403–423 (YLSYLLYPLCIGGAAYSLLNV). The Extracellular segment spans residues 424–428 (KYKSW). A helical transmembrane segment spans residues 429–449 (YSWLINSFVNGVYAFGFLFML). The Cytoplasmic segment spans residues 450–536 (PQLFVNYKMK…YEEKPKKKSS (87 aa)).

The protein belongs to the CLPTM1 family.

The protein localises to the endoplasmic reticulum membrane. It carries out the reaction a 6-(alpha-D-glucosaminyl)-1-(1,2-diacyl-sn-glycero-3-phospho)-1D-myo-inositol(in) = a 6-(alpha-D-glucosaminyl)-1-(1,2-diacyl-sn-glycero-3-phospho)-1D-myo-inositol(out). The catalysed reaction is 6-(alpha-D-glucosaminyl)-(1-octadecanoyl,2-(9Z)-octadecenoyl-sn-glycero-3-phospho)-1D-myo-inositol(in) = 6-(alpha-D-glucosaminyl)-(1-octadecanoyl,2-(9Z)-octadecenoyl-sn-glycero-3-phospho)-1D-myo-inositol(out). The enzyme catalyses a 1,2-diacyl-sn-glycero-3-phospho-(1D-myo-inositol)(in) = a 1,2-diacyl-sn-glycero-3-phospho-(1D-myo-inositol)(out). It catalyses the reaction a 1,2-diacyl-sn-glycero-3-phosphocholine(in) = a 1,2-diacyl-sn-glycero-3-phosphocholine(out). It carries out the reaction a 1,2-diacyl-sn-glycero-3-phosphoethanolamine(in) = a 1,2-diacyl-sn-glycero-3-phosphoethanolamine(out). Functionally, scramblase that mediates the translocation of glucosaminylphosphatidylinositol (alpha-D-GlcN-(1-6)-(1,2-diacyl-sn-glycero-3-phospho)-1D-myo-inositol, GlcN-PI) across the endoplasmic reticulum (ER) membrane, from the cytosolic leaflet to the luminal leaflet of the ER membrane, where it participates in the biosynthesis of glycosylphosphatidylinositol (GPI). GPI is a lipid glycoconjugate involved in post-translational modification of proteins. Can also translocate 1,2-diacyl-sn-glycero-3-phospho-(1D-myo-inositol) (phosphatidylinositol or PI), as well as several other phospholipids (1,2-diacyl-sn-glycero-3-phosphocholine, 1,2-diacyl-sn-glycero-3-phosphoethanolamine), and N-acetylglucosaminylphosphatidylinositol (GlcNAc-PI) in vitro. The polypeptide is Lipid scramblase CLPTM1L (CLPTM1L) (Gallus gallus (Chicken)).